A 249-amino-acid chain; its full sequence is Expansin-A19 (249 aa).

The N-terminal stretch at 1–21 (MGNIFLQLLAVVALCIAPARS) is a signal peptide. Positions 41-154 (GGACGYGNLY…QQVKCWRYGG (114 aa)) constitute an Expansin-like EG45 domain. N-linked (GlcNAc...) asparagine glycans are attached at residues Asn-116 and Asn-216. Positions 164–243 (YFELVLVTNM…GWSFGQTFST (80 aa)) constitute an Expansin-like CBD domain.

Belongs to the expansin family. Expansin A subfamily.

The protein localises to the secreted. It is found in the cell wall. The protein resides in the membrane. In terms of biological role, may cause loosening and extension of plant cell walls by disrupting non-covalent bonding between cellulose microfibrils and matrix glucans. No enzymatic activity has been found. May be required for rapid internodal elongation in deepwater rice during submergence. The protein is Expansin-A19 (EXPA19) of Oryza sativa subsp. japonica (Rice).